Reading from the N-terminus, the 339-residue chain is Phosphate acyltransferase (339 aa).

The protein belongs to the PlsX family. As to quaternary structure, homodimer. Probably interacts with PlsY.

Its subcellular location is the cytoplasm. The catalysed reaction is a fatty acyl-[ACP] + phosphate = an acyl phosphate + holo-[ACP]. The protein operates within lipid metabolism; phospholipid metabolism. Functionally, catalyzes the reversible formation of acyl-phosphate (acyl-PO(4)) from acyl-[acyl-carrier-protein] (acyl-ACP). This enzyme utilizes acyl-ACP as fatty acyl donor, but not acyl-CoA. The chain is Phosphate acyltransferase from Clostridium perfringens (strain SM101 / Type A).